A 38-amino-acid polypeptide reads, in one-letter code: Alpha-2-macroglobulin homolog (38 aa).

A cross-link (isoglutamyl cysteine thioester (Cys-Gln)) is located at residues 27–30; that stretch reads CGEQ.

The protein belongs to the protease inhibitor I39 (alpha-2-macroglobulin) family. As to quaternary structure, homodimer; disulfide-linked. As to expression, hemolymph.

The protein localises to the secreted. Its function is as follows. Is able to inhibit all four classes of proteinases by a unique 'trapping' mechanism. This protein has a peptide stretch, called the 'bait region' which contains specific cleavage sites for different proteinases. When a proteinase cleaves the bait region, a conformational change is induced in the protein which traps the proteinase. The entrapped enzyme remains active against low molecular weight substrates (activity against high molecular weight substrates is greatly reduced). Following cleavage in the bait region a thioester bond is hydrolyzed and mediates the covalent binding of the protein to the proteinase. The protein is Alpha-2-macroglobulin homolog of Homarus americanus (American lobster).